The sequence spans 186 residues: NADH dehydrogenase [ubiquinone] 1 beta subcomplex subunit 8, mitochondrial (186 aa).

The N-terminal 28 residues, 1-28 (MAAARAGVLGVRWLQKAARNVVPLGART), are a transit peptide targeting the mitochondrion. The chain crosses the membrane as a helical span at residues 133–153 (LFGFVAFMLFMFWVGETYPAY).

The protein belongs to the complex I NDUFB8 subunit family. Complex I is composed of 45 different subunits.

The protein resides in the mitochondrion inner membrane. In terms of biological role, accessory subunit of the mitochondrial membrane respiratory chain NADH dehydrogenase (Complex I), that is believed not to be involved in catalysis. Complex I functions in the transfer of electrons from NADH to the respiratory chain. The immediate electron acceptor for the enzyme is believed to be ubiquinone. The polypeptide is NADH dehydrogenase [ubiquinone] 1 beta subcomplex subunit 8, mitochondrial (NDUFB8) (Bos taurus (Bovine)).